Here is a 419-residue protein sequence, read N- to C-terminus: Tyrosine--tRNA ligase (419 aa).

Position 34 (Y34) interacts with L-tyrosine. The short motif at 39–48 is the 'HIGH' region element; the sequence is PSGDSMHIGH. 2 residues coordinate L-tyrosine: Y168 and Q172. The 'KMSKS' region signature appears at 230-234; sequence KFGKS. Residue K233 coordinates ATP. Positions 352 to 418 constitute an S4 RNA-binding domain; that stretch reads ANLVDWLVTL…GKKKYFLVSY (67 aa).

It belongs to the class-I aminoacyl-tRNA synthetase family. TyrS type 1 subfamily. As to quaternary structure, homodimer.

It localises to the cytoplasm. The catalysed reaction is tRNA(Tyr) + L-tyrosine + ATP = L-tyrosyl-tRNA(Tyr) + AMP + diphosphate + H(+). Its function is as follows. Catalyzes the attachment of tyrosine to tRNA(Tyr) in a two-step reaction: tyrosine is first activated by ATP to form Tyr-AMP and then transferred to the acceptor end of tRNA(Tyr). This Listeria monocytogenes serotype 4a (strain HCC23) protein is Tyrosine--tRNA ligase.